The chain runs to 1028 residues: Pentatricopeptide repeat-containing protein At3g09040, mitochondrial (1028 aa).

A mitochondrion-targeting transit peptide spans 1 to 30 (MYFRVLLTPSSAMFDSFSFVRRLSYSPDLG). 24 PPR repeats span residues 94-123 (EGRL…FLEK), 124-158 (DVTA…QIFP), 159-193 (NKFT…GLER), 194-224 (NSYC…IVDP), 225-259 (NTVC…GHRP), 260-290 (DHLA…MSSP), 291-325 (DVVA…SVKS), 326-360 (TRST…GLAS), 361-391 (NIYV…LEEK), 392-426 (NDVF…GYNI), 427-461 (DDFT…KLAK), 462-492 (NLFV…MCDR), 493-527 (DNVT…GIVS), 528-562 (DGAC…GLDR), 563-593 (DLHT…LPEW), 594-627 (SVVS…GVNP), 628-662 (SEIT…GFSS), 664-694 (GEYL…LSSP), 696-730 (SIVL…GVLP), 731-765 (DQAT…AHDL), 766-796 (DELT…MRRR), 798-832 (NVVS…HIMP), 833-863 (DEIT…MIGQ), and 869-899 (RVDH…QNLK). The segment at 904–979 (LWSSLLGACR…VPGYSWIDVE (76 aa)) is type E motif. Residues 980–1010 (QRTHIFAAGDKSHSEIGKIEMFLEDLYDLMK) are type E(+) motif.

It belongs to the PPR family. PCMP-E subfamily.

It is found in the mitochondrion. This is Pentatricopeptide repeat-containing protein At3g09040, mitochondrial (PCMP-E88) from Arabidopsis thaliana (Mouse-ear cress).